The chain runs to 133 residues: MDRQRSRKGSTHALMAHDQAPASGGCVSKHLAQTWPLPGNGVKVQVLFTQKGLVSWRESESLLRLNTCIQRHQRRITTLCKRGSKTQKTHNSLTYFPINRPVNRKFSKTFFDFLYDVFLWQGPITSNDITHKI.

This is an uncharacterized protein from Homo sapiens (Human).